Here is a 915-residue protein sequence, read N- to C-terminus: Protein translocase subunit SecA (915 aa).

Residues Q87, 105 to 109, and D516 each bind ATP; that span reads GEGKT. The tract at residues 866–915 is disordered; sequence MTYGAPSDGDIGGSVEDEPLELPEGARVGRNDPCPCGSGKKYKQCHGKLS. C899, C901, C910, and H911 together coordinate Zn(2+). The segment covering 905–915 has biased composition (basic residues); sequence KKYKQCHGKLS.

Belongs to the SecA family. In terms of assembly, monomer and homodimer. Part of the essential Sec protein translocation apparatus which comprises SecA, SecYEG and auxiliary proteins SecDF-YajC and YidC. The cofactor is Zn(2+).

It is found in the cell inner membrane. It localises to the cytoplasm. It carries out the reaction ATP + H2O + cellular proteinSide 1 = ADP + phosphate + cellular proteinSide 2.. Part of the Sec protein translocase complex. Interacts with the SecYEG preprotein conducting channel. Has a central role in coupling the hydrolysis of ATP to the transfer of proteins into and across the cell membrane, serving both as a receptor for the preprotein-SecB complex and as an ATP-driven molecular motor driving the stepwise translocation of polypeptide chains across the membrane. The protein is Protein translocase subunit SecA of Delftia acidovorans (strain DSM 14801 / SPH-1).